We begin with the raw amino-acid sequence, 156 residues long: uncharacterized protein (156 aa).

Residue His55 is part of the active site.

It belongs to the thioester dehydratase family. FabZ subfamily.

This is an uncharacterized protein from Halalkalibacterium halodurans (strain ATCC BAA-125 / DSM 18197 / FERM 7344 / JCM 9153 / C-125) (Bacillus halodurans).